The primary structure comprises 877 residues: Probable alpha/beta-glucosidase agdC (877 aa).

Residues 1 to 14 form the signal peptide; that stretch reads MLGSLLLLAPLAGA. N-linked (GlcNAc...) asparagine glycosylation is found at asparagine 171, asparagine 293, and asparagine 373. Aspartate 422 serves as the catalytic Nucleophile. Glutamate 425 is a catalytic residue. The segment at 432 to 476 is disordered; that stretch reads DPCTDPERYSSENNLPPAPPPVRSSSPRPLPGFPADFQPSSASRS. Pro residues predominate over residues 447-463; that stretch reads PPAPPPVRSSSPRPLPG. N-linked (GlcNAc...) asparagine glycosylation occurs at asparagine 508. Aspartate 573 acts as the Proton donor in catalysis. Asparagine 574, asparagine 610, and asparagine 744 each carry an N-linked (GlcNAc...) asparagine glycan.

Belongs to the glycosyl hydrolase 31 family.

It localises to the secreted. The enzyme catalyses Hydrolysis of terminal, non-reducing (1-&gt;4)-linked alpha-D-glucose residues with release of alpha-D-glucose.. The catalysed reaction is Hydrolysis of terminal, non-reducing beta-D-glucosyl residues with release of beta-D-glucose.. Its function is as follows. Glucosidase involved in the degradation of cellulosic biomass. Has both alpha- and beta-glucosidase activity. This chain is Probable alpha/beta-glucosidase agdC (agdC), found in Aspergillus oryzae (strain ATCC 42149 / RIB 40) (Yellow koji mold).